The following is a 510-amino-acid chain: Alpha-L-arabinofuranosidase B (510 aa).

The signal sequence occupies residues 1–24 (MTMSRSSRSSVLALALATGSLVAA). The interval 25–342 (GPCDIYSSGG…ADIVAAKYAT (318 aa)) is catalytic. Disulfide bonds link Cys-27–Cys-37, Cys-87–Cys-92, and Cys-182–Cys-183. N-linked (GlcNAc...) asparagine glycosylation is present at Asn-89. Residue Asp-225 coordinates substrate. Glu-227 serves as the catalytic Nucleophile. Residues Asn-228 and Gly-303 each coordinate substrate. Asp-304 serves as the catalytic Proton donor. The interval 343 to 510 (TSLISGPALT…VSWVVADGFA (168 aa)) is ABD. Cys-412 and Cys-450 form a disulfide bridge. Substrate is bound by residues His-427, Asn-429, Phe-430, Asp-446, His-475, Glu-477, Leu-480, and Asp-500.

This sequence belongs to the glycosyl hydrolase 54 family.

The protein resides in the secreted. The enzyme catalyses Hydrolysis of terminal non-reducing alpha-L-arabinofuranoside residues in alpha-L-arabinosides.. It functions in the pathway glycan metabolism; L-arabinan degradation. Alpha-L-arabinofuranosidase involved in the degradation of arabinoxylan, a major component of plant hemicellulose. Able to hydrolyze 1,5-, 1,3- and 1,2-alpha-linkages not only in L-arabinofuranosyl oligosaccharides, but also in polysaccharides containing terminal non-reducing L-arabinofuranoses in side chains, like L-arabinan, arabinogalactan and arabinoxylan. This Emericella nidulans (strain FGSC A4 / ATCC 38163 / CBS 112.46 / NRRL 194 / M139) (Aspergillus nidulans) protein is Alpha-L-arabinofuranosidase B (abfB).